Reading from the N-terminus, the 586-residue chain is Protein HOL1 (586 aa).

Residues 1–66 (MDKYTNRDHP…NWSSWRKLAH (66 aa)) lie on the Extracellular side of the membrane. A helical membrane pass occupies residues 67–87 (FGLMAFITAFTAATSNDAGAA). The Cytoplasmic portion of the chain corresponds to 88–103 (QDSLNEIYGISYDSMN). Residues 104–124 (TGAGVLFLGIGWSTLFLAPFA) traverse the membrane as a helical segment. The Extracellular segment spans residues 125–130 (NLYGRK). The helical transmembrane segment at 131 to 151 (ITYIVCTTLGLFGALWFALAK) threads the bilayer. The Cytoplasmic segment spans residues 152-189 (RTSDTIWSQLFVGISESCAEAQVQLSLSDIFFQHQLGS). Residues 190–210 (VLTVYIMCTSIGTFLGPLIAG) form a helical membrane-spanning segment. Residues 211–219 (YISAFTNFR) are Extracellular-facing. Residues 220-240 (WVGWVAVIISGGLLITIIFGC) traverse the membrane as a helical segment. The Cytoplasmic segment spans residues 241–362 (EETYFDRGQY…YFKYLKINLR (122 aa)). A helical transmembrane segment spans residues 363–383 (MFLFPPVWLSGMFWGIQDVFL). At 384–413 (TFYLTTQESAYYEPPWNYSDFGVAIMNVPT) the chain is on the extracellular side. A helical transmembrane segment spans residues 414–434 (LIGAVIGCICAGIVSDYFVLW). Residues 435-448 (MARHNRGILEAEFR) lie on the Cytoplasmic side of the membrane. A helical membrane pass occupies residues 449-469 (LYFSIATAIIGPAGLLMFGIG). Over 470–477 (TARQWPWQ) the chain is Extracellular. The helical transmembrane segment at 478–498 (AIYVGLGFVGFAWGCSGDIAM) threads the bilayer. Residues 499-508 (AYLMDCYPDM) are Cytoplasmic-facing. Residues 509-529 (VLEGMVCTAIINNTISCIFTF) traverse the membrane as a helical segment. The Extracellular segment spans residues 530–544 (TCSDWLAASGTENTY). A helical transmembrane segment spans residues 545 to 565 (IALAVINFGITAFALPMYYYG). Topologically, residues 566-586 (KRIRLWTKRWYLQSVNLRDGV) are cytoplasmic.

Its subcellular location is the membrane. Functionally, seems to be involved in the uptake of several cations and of histidinol. In Saccharomyces cerevisiae (strain ATCC 204508 / S288c) (Baker's yeast), this protein is Protein HOL1 (HOL1).